The following is a 271-amino-acid chain: L-aspartate dehydrogenase (271 aa).

NAD(+) is bound by residues Ala-124 and Asn-192. His-222 is a catalytic residue.

Belongs to the L-aspartate dehydrogenase family.

The enzyme catalyses L-aspartate + NADP(+) + H2O = oxaloacetate + NH4(+) + NADPH + H(+). It catalyses the reaction L-aspartate + NAD(+) + H2O = oxaloacetate + NH4(+) + NADH + H(+). It participates in cofactor biosynthesis; NAD(+) biosynthesis; iminoaspartate from L-aspartate (dehydrogenase route): step 1/1. Functionally, specifically catalyzes the NAD or NADP-dependent dehydrogenation of L-aspartate to iminoaspartate. This is L-aspartate dehydrogenase from Methanosarcina mazei (strain ATCC BAA-159 / DSM 3647 / Goe1 / Go1 / JCM 11833 / OCM 88) (Methanosarcina frisia).